The chain runs to 316 residues: MANLKAIRDRIKSVRNTRKITEAMRLVAAAKVRRAQEQVLSTRPFADRLAQVLAGLQQRLQFENVDLPLLQRREVKTVALLVVSGDRGLCGGYNSNVIRRAEQRARELSAQGLDYKFVIVGRKAGQYFQRREQPIEATYSGLEQIPTAQEANDIADELLSLFLSGTVDRVELVYTKFLSLVASNPVVQTLLPLDPQGLASSDDEIFRLTTRGGSFTVEREKLTSEVAPLPRDMIFEQDPAQILSALLPLYLSNQLLRALQEAAASELAARMTAMNSASDNANALVGQLTLVYNKARQAAITQELLEVVAGAEALNG.

This sequence belongs to the ATPase gamma chain family. In terms of assembly, F-type ATPases have 2 components, CF(1) - the catalytic core - and CF(0) - the membrane proton channel. CF(1) has five subunits: alpha(3), beta(3), gamma(1), delta(1), epsilon(1). CF(0) has three main subunits: a, b and c.

The protein localises to the cellular thylakoid membrane. Functionally, produces ATP from ADP in the presence of a proton gradient across the membrane. The gamma chain is believed to be important in regulating ATPase activity and the flow of protons through the CF(0) complex. The protein is ATP synthase gamma chain of Synechococcus elongatus (strain ATCC 33912 / PCC 7942 / FACHB-805) (Anacystis nidulans R2).